Reading from the N-terminus, the 279-residue chain is BEN domain-containing protein 6 (279 aa).

Residues 1–15 (MQKIVQTDEITNTQA) are compositionally biased toward polar residues. 2 disordered regions span residues 1 to 65 (MQKI…LAEL) and 134 to 172 (RATN…TDEK). A coiled-coil region spans residues 62-99 (LAELSKEELCAKIKSLKEKLTNTRKENSRLRQSLVMLQ). The segment covering 134–148 (RATNNSSPDSFASTC) has biased composition (polar residues). A compositionally biased stretch (basic and acidic residues) spans 162-172 (KPEEEHQTDEK). In terms of domain architecture, BEN spans 171–271 (EKQFQIEKWQ…NCTKKPNLSK (101 aa)).

In terms of assembly, interacts (via BEN domain) with RBPJ.

It is found in the nucleus. In terms of biological role, acts as a corepressor of recombining binding protein suppressor hairless (RBPJ) and inhibits Notch signaling in neural stem cells, thereby opposing their self-renewal and promoting neurogenesis. The polypeptide is BEN domain-containing protein 6 (BEND6) (Homo sapiens (Human)).